The sequence spans 382 residues: uncharacterized protein (382 aa).

The first 25 residues, 1–25 (MKKWMAAVFVMMLMLCFGGIENVKA), serve as a signal peptide directing secretion. Catalysis depends on Ser186, which acts as the Nucleophile. Residues Asp354 and His357 contribute to the active site.

This sequence belongs to the 'GDSL' lipolytic enzyme family.

This is an uncharacterized protein from Bacillus subtilis (strain 168).